Reading from the N-terminus, the 359-residue chain is 3-dehydroquinate synthase (359 aa).

Residues 71–76, 105–109, 129–130, lysine 142, lysine 151, and 169–172 contribute to the NAD(+) site; these read DGEQYK, GVIGD, TT, and CLKT. Positions 184, 247, and 264 each coordinate Zn(2+).

It belongs to the sugar phosphate cyclases superfamily. Dehydroquinate synthase family. Co(2+) serves as cofactor. Zn(2+) is required as a cofactor. Requires NAD(+) as cofactor.

It is found in the cytoplasm. It catalyses the reaction 7-phospho-2-dehydro-3-deoxy-D-arabino-heptonate = 3-dehydroquinate + phosphate. Its pathway is metabolic intermediate biosynthesis; chorismate biosynthesis; chorismate from D-erythrose 4-phosphate and phosphoenolpyruvate: step 2/7. Functionally, catalyzes the conversion of 3-deoxy-D-arabino-heptulosonate 7-phosphate (DAHP) to dehydroquinate (DHQ). This Shewanella amazonensis (strain ATCC BAA-1098 / SB2B) protein is 3-dehydroquinate synthase.